Consider the following 483-residue polypeptide: Regulatory protein ViaA (483 aa).

Belongs to the ViaA family. In terms of assembly, homodimer. Interacts with RavA.

It is found in the cytoplasm. Component of the RavA-ViaA chaperone complex, which may act on the membrane to optimize the function of some of the respiratory chains. ViaA stimulates the ATPase activity of RavA. In Shigella boydii serotype 18 (strain CDC 3083-94 / BS512), this protein is Regulatory protein ViaA.